The chain runs to 173 residues: Alpha-crystallin A chain (173 aa).

Met-1 carries the N-acetylmethionine modification. The required for complex formation with BFSP1 and BFSP2 stretch occupies residues 1-63; that stretch reads MDIAIQHPWF…RSVLDSGISE (63 aa). At Gln-6 the chain carries Deamidated glutamine; partial. The residue at position 45 (Ser-45) is a Phosphoserine. Gln-50 carries the deamidated glutamine; partial modification. Positions 52–162 constitute a sHSP domain; it reads LFRSVLDSGI…GHSERAIPVS (111 aa). An N6-acetyllysine modification is found at Lys-70. A Deamidated glutamine; partial modification is found at Gln-90. An N6-acetyllysine modification is found at Lys-99. His-100 serves as a coordination point for Zn(2+). Position 101 is a deamidated asparagine; partial (Asn-101). Zn(2+) contacts are provided by Glu-102 and His-107. Ser-122 carries the post-translational modification Phosphoserine. A Deamidated asparagine; partial modification is found at Asn-123. Positions 144–173 are disordered; that stretch reads PKVTSGMDAGHSERAIPVSREEKPSSAPSS. The span at 153–167 shows a compositional bias: basic and acidic residues; that stretch reads GHSERAIPVSREEKP. His-154 is a Zn(2+) binding site. O-linked (GlcNAc) serine glycosylation is present at Ser-162.

The protein belongs to the small heat shock protein (HSP20) family. Heteromer composed of three CRYAA and one CRYAB subunits. Inter-subunit bridging via zinc ions enhances stability, which is crucial as there is no protein turn over in the lens. Can also form homodimers and homotetramers (dimers of dimers) which serve as the building blocks of homooligomers. Within homooligomers, the zinc-binding motif is created from residues of 3 different molecules. His-100 and Glu-102 from one molecule are ligands of the zinc ion, and His-107 and His-154 residues from additional molecules complete the site with tetrahedral coordination geometry. Part of a complex required for lens intermediate filament formation composed of BFSP1, BFSP2 and CRYAA. In terms of processing, acetylation at Lys-70 may increase chaperone activity. Undergoes age-dependent proteolytical cleavage at the C-terminus.

It localises to the cytoplasm. It is found in the nucleus. In terms of biological role, contributes to the transparency and refractive index of the lens. Acts as a chaperone, preventing aggregation of various proteins under a wide range of stress conditions. Required for the correct formation of lens intermediate filaments as part of a complex composed of BFSP1, BFSP2 and CRYAA. The chain is Alpha-crystallin A chain (CRYAA) from Phocoena phocoena (Harbor porpoise).